The chain runs to 430 residues: Glial fibrillary acidic protein (430 aa).

The disordered stretch occupies residues 1–31 (MERRRITSARRSYASSETMVRGHGPTRHLGT). The segment at 1-70 (MERRRITSAR…KETRASERAE (70 aa)) is head. A Phosphothreonine; by AURKB and ROCK1 modification is found at Thr-7. A compositionally biased stretch (polar residues) spans 9–18 (ARRSYASSET). Arg-11 bears the Omega-N-methylarginine mark. Position 12 is a phosphoserine (Ser-12). Position 21 is an omega-N-methylarginine (Arg-21). A Citrulline modification is found at Arg-34. At Ser-36 the chain carries Phosphoserine; by AURKB and ROCK1. The residue at position 41 (Thr-41) is a Phosphothreonine. Positions 67 to 375 (ERAEMMELND…KLLEGEENRI (309 aa)) constitute an IF rod domain. Residues 71 to 102 (MMELNDRFASYIEKVRFLEQQNKALAAELNQL) are coil 1A. Ser-80 bears the Phosphoserine mark. Positions 103-113 (RAKEPTKLADV) are linker 1. A phosphothreonine mark is found at Thr-108 and Thr-148. A coil 1B region spans residues 114–212 (YQAELRELRL…EEEVRELQEQ (99 aa)). The tract at residues 213-228 (LAQQQVHVEMDVAKPD) is linker 12. The coil 2A stretch occupies residues 229 to 250 (LTAALREIRTQYEAVATSNMQE). The linker 2 stretch occupies residues 251–254 (TEEW). The coil 2B stretch occupies residues 255–375 (YRSKFADLTD…KLLEGEENRI (121 aa)). Ser-267 is modified (phosphoserine). At Arg-268 the chain carries Citrulline. Ser-321 carries the post-translational modification Phosphoserine. Positions 376–430 (TIPVQTFSNLQIRETSLDTKSVSEGHLKRNIVVKTVEMRDGEVIKESKQEHKDVM) are tail. Phosphothreonine is present on Thr-381. At Ser-383 the chain carries Phosphoserine. Residues Arg-404 and Arg-414 each carry the citrulline modification.

This sequence belongs to the intermediate filament family. In terms of assembly, interacts with SYNM. As to quaternary structure, interacts with PSEN1 (via N-terminus). Post-translationally, phosphorylated by PKN1. As to expression, expressed in the cortex and hippocampus. Expression decreases following acute and chronic corticosterone treatment.

Its subcellular location is the cytoplasm. Its function is as follows. GFAP, a class-III intermediate filament, is a cell-specific marker that, during the development of the central nervous system, distinguishes astrocytes from other glial cells. In Rattus norvegicus (Rat), this protein is Glial fibrillary acidic protein (Gfap).